The primary structure comprises 90 residues: MGPSQLVRAPRPPGLTSPYRRPGMGGPRRRCPSMFKCSRRTYRQKPRGPTATNPASEATNISDTDTTTSVLILSPRVLRFLCQPGGFLVL.

The segment at 1-63 is disordered; the sequence is MGPSQLVRAP…PASEATNISD (63 aa). Residues 27–46 show a composition bias toward basic residues; sequence PRRRCPSMFKCSRRTYRQKP. Positions 50 to 63 are enriched in polar residues; the sequence is TATNPASEATNISD.

The protein is PIK3R3 upstream open reading frame protein of Mus musculus (Mouse).